The chain runs to 127 residues: Large ribosomal subunit protein bL17 (127 aa).

Belongs to the bacterial ribosomal protein bL17 family. Part of the 50S ribosomal subunit. Contacts protein L32.

This chain is Large ribosomal subunit protein bL17, found in Vibrio vulnificus (strain CMCP6).